The following is a 413-amino-acid chain: 3-hydroxy-3-methylglutaryl-coenzyme A reductase (413 aa).

Residues glutamate 106 and aspartate 312 each act as charge relay system in the active site. The active-site Proton donor is histidine 408.

It belongs to the HMG-CoA reductase family.

It catalyses the reaction (R)-mevalonate + 2 NADP(+) + CoA = (3S)-3-hydroxy-3-methylglutaryl-CoA + 2 NADPH + 2 H(+). It functions in the pathway metabolic intermediate biosynthesis; (R)-mevalonate biosynthesis; (R)-mevalonate from acetyl-CoA: step 3/3. Functionally, converts HMG-CoA to mevalonate. The sequence is that of 3-hydroxy-3-methylglutaryl-coenzyme A reductase (hmgA) from Pyrococcus horikoshii (strain ATCC 700860 / DSM 12428 / JCM 9974 / NBRC 100139 / OT-3).